The sequence spans 567 residues: DNA ligase B (567 aa).

K132 functions as the N6-AMP-lysine intermediate in the catalytic mechanism.

The protein belongs to the NAD-dependent DNA ligase family. LigB subfamily.

It catalyses the reaction NAD(+) + (deoxyribonucleotide)n-3'-hydroxyl + 5'-phospho-(deoxyribonucleotide)m = (deoxyribonucleotide)n+m + AMP + beta-nicotinamide D-nucleotide.. Its function is as follows. Catalyzes the formation of phosphodiester linkages between 5'-phosphoryl and 3'-hydroxyl groups in double-stranded DNA using NAD as a coenzyme and as the energy source for the reaction. This Yersinia pseudotuberculosis serotype O:1b (strain IP 31758) protein is DNA ligase B.